Reading from the N-terminus, the 577-residue chain is Scoloptoxin SSD14 (577 aa).

A signal peptide spans 1–25 (MGTSYRKLGYVLFLMLGMIVEEGIA).

Heterodimer composed of subunits alpha and beta; probably disulfide-linked. As to expression, expressed by the venom gland.

The protein resides in the secreted. In terms of biological role, dose-dependently induces human platelet aggregation on both plasma rich platelet and washed platelet (max. response at 3.2 ug/mL) and causes hemolysis against mouse and rabbit erythrocytes (35 and 65% respectively at 5 ug/mL). Does not show hemolytic activity against human erythrocytes (even at 100 ug/mL). The chain is Scoloptoxin SSD14 from Scolopendra dehaani (Thai centipede).